We begin with the raw amino-acid sequence, 178 residues long: Large ribosomal subunit protein uL6 (178 aa).

The protein belongs to the universal ribosomal protein uL6 family. Part of the 50S ribosomal subunit.

This protein binds to the 23S rRNA, and is important in its secondary structure. It is located near the subunit interface in the base of the L7/L12 stalk, and near the tRNA binding site of the peptidyltransferase center. In Helicobacter pylori (strain Shi470), this protein is Large ribosomal subunit protein uL6.